Consider the following 280-residue polypeptide: Four and a half LIM domains protein 3 (280 aa).

N-acetylserine is present on Ser-2. The C4-type zinc-finger motif lies at 7–31 (CAKCNESLYGRKYIQTDSGPYCVPC). LIM zinc-binding domains are found at residues 40–92 (CAEC…CNDC) and 101–153 (CSAC…CVPC). Lys-157 is subject to N6-acetyllysine. LIM zinc-binding domains lie at 162 to 212 (CARC…CVAC) and 221 to 275 (CSSC…CQGC). Residue Lys-235 is modified to N6-acetyllysine.

In terms of assembly, interacts with SOX15; the interaction recruits FHL3 to FOXK1 promoters where it acts as a transcriptional coactivator of FOXK1. In terms of tissue distribution, expressed only in skeletal muscle.

It localises to the nucleus. Its subcellular location is the cytoplasm. Recruited by SOX15 to FOXK1 promoters where it acts as a transcriptional coactivator of FOXK1. The protein is Four and a half LIM domains protein 3 (FHL3) of Homo sapiens (Human).